The chain runs to 735 residues: Probable ATP-dependent RNA helicase DHR2 (735 aa).

A compositionally biased stretch (polar residues) spans 1–13 (MAANSNSRVASNH). The interval 1–29 (MAANSNSRVASNHTSKKQKVRRNIHPFTN) is disordered. A compositionally biased stretch (basic residues) spans 14 to 24 (TSKKQKVRRNI). Positions 91 to 257 (MSYIESNPVT…FNNAPILFVE (167 aa)) constitute a Helicase ATP-binding domain. 104 to 111 (GETGSGKS) is an ATP binding site. A DEAH box motif is present at residues 203 to 206 (DEAH). The 195-residue stretch at 262-456 (DVKQYYLKAP…SPVLMLKRYG (195 aa)) folds into the Helicase C-terminal domain.

It belongs to the DEAD box helicase family. DEAH subfamily. As to quaternary structure, interacts with NOP19. Interacts with UBP10.

The protein resides in the nucleus. It localises to the nucleolus. The enzyme catalyses ATP + H2O = ADP + phosphate + H(+). Probable ATP-binding RNA helicase. Required for 18S rRNA synthesis. The polypeptide is Probable ATP-dependent RNA helicase DHR2 (DHR2) (Saccharomyces cerevisiae (strain ATCC 204508 / S288c) (Baker's yeast)).